Here is a 91-residue protein sequence, read N- to C-terminus: Large ribosomal subunit protein bL31B (91 aa).

Belongs to the bacterial ribosomal protein bL31 family. Type B subfamily. In terms of assembly, part of the 50S ribosomal subunit.

This Mycolicibacterium vanbaalenii (strain DSM 7251 / JCM 13017 / BCRC 16820 / KCTC 9966 / NRRL B-24157 / PYR-1) (Mycobacterium vanbaalenii) protein is Large ribosomal subunit protein bL31B.